The following is a 249-amino-acid chain: Type III pantothenate kinase (249 aa).

Residue 6 to 13 participates in ATP binding; the sequence is DCGNSFIK. Residues tyrosine 93 and 100–103 contribute to the substrate site; that span reads GLDR. The active-site Proton acceptor is the aspartate 102. K(+) is bound at residue aspartate 122. Residue threonine 125 coordinates ATP. Residue threonine 181 coordinates substrate.

This sequence belongs to the type III pantothenate kinase family. As to quaternary structure, homodimer. It depends on NH4(+) as a cofactor. The cofactor is K(+).

Its subcellular location is the cytoplasm. It carries out the reaction (R)-pantothenate + ATP = (R)-4'-phosphopantothenate + ADP + H(+). The protein operates within cofactor biosynthesis; coenzyme A biosynthesis; CoA from (R)-pantothenate: step 1/5. Catalyzes the phosphorylation of pantothenate (Pan), the first step in CoA biosynthesis. The sequence is that of Type III pantothenate kinase from Pseudomonas fluorescens (strain Pf0-1).